The primary structure comprises 197 residues: MSTNFIYPNAHLIAGVDEVGRGPLVGAVVTAAVILAPNNPIEGLADSKKLSEKKRLLLAEEIKAKALCWSLGRAEPEEIDRLNILHATMLAMQRAVAGLNIQPDFVLVDGNRIPTLPMPAQAVIKGDSLVAEISAASILAKVARDQEMAELDVQYPEYGFAKHKGYPTKLHFEKLEQFGATPFHRKSFAPVKKILGL.

Positions 11–197 constitute an RNase H type-2 domain; that stretch reads HLIAGVDEVG…FAPVKKILGL (187 aa). The a divalent metal cation site is built by aspartate 17, glutamate 18, and aspartate 109.

This sequence belongs to the RNase HII family. The cofactor is Mn(2+). It depends on Mg(2+) as a cofactor.

The protein resides in the cytoplasm. It catalyses the reaction Endonucleolytic cleavage to 5'-phosphomonoester.. Endonuclease that specifically degrades the RNA of RNA-DNA hybrids. The chain is Ribonuclease HII from Actinobacillus pleuropneumoniae serotype 5b (strain L20).